The following is a 171-amino-acid chain: Calcium channel flower homolog (171 aa).

Over 1–31 (MSGSGAAGAAAGPAPPAQEEGMTWWYRWLCR) the chain is Cytoplasmic. The helical transmembrane segment at 32–52 (LAGVLGAVSCAISGLFNCVTI) threads the bilayer. Over 53–56 (HPLN) the chain is Extracellular. The chain crosses the membrane as a helical span at residues 57–77 (IAAGVWMIMNAFILLLCEAPF). Over 78 to 101 (CCQFVEFANTVAEKVDRLRSWQKA) the chain is Cytoplasmic. A helical membrane pass occupies residues 102-122 (VFYCGMAIVPIVMSLTLTTLL). At 123-124 (GN) the chain is on the extracellular side. The chain crosses the membrane as a helical span at residues 125–141 (AIAFATGVLYGLSALGK). Over 142–171 (KGDAISYARIQQQRQQADEEKLAETFEGEL) the chain is Cytoplasmic.

This sequence belongs to the calcium channel flower family. Interacts with adaptor protein complex 2 (AP-2). As to expression, expressed in neurons in the brain (at protein level). Expressed in neuroblastoma cell lines (at protein level). Expressed in cytotoxic T-lymphoocytes (at protein level). In terms of tissue distribution, low levels of expression in various tissues including the brain, eye, heart, liver and colon. Expression in the heart is at slightly higher levels than isoform 3. Expressed in skin cells. Very low levels of expression in the brain, liver and eye. Detected at very low levels of expression in skin cells. As to expression, expressed in various tissues, with highest levels of expression in the brain and eye. Expressed in skin cells. Low levels of expression in the liver, colon, heart and spleen. In terms of tissue distribution, barely detected in the brain and liver.

It is found in the cell membrane. Its subcellular location is the vesicle. Functionally, transmembrane protein which mediates synaptic endocytosis and fitness-based cell culling. In response to different stimulus strengths, controls two major modes of synaptic vesicle (SV) retrieval in hippocampal neurons; Clathrin-mediated endocytosis (CME) in response to mild stimulation and activity-dependent bulk endocytosis (ADBE) in response to strong stimulation. In cytotoxic T-lymphoocytes (CTLs) facilitates calcium-dependent endocytosis of cytotoxic granules (CGs) at the immuno synapse. Different isoforms work as fitness fingerprints in 'loser' and 'winner' cells and thereby mediate win/lose decisions as part of the cell competition process. This chain is Calcium channel flower homolog (Cacfd1), found in Mus musculus (Mouse).